A 288-amino-acid chain; its full sequence is MAQRVRWERVERVAEAFSRLSIGEVLGFEEQVDPQYKLVSRLAGEIGAGKAALSALLVGLASYRLAMRGEEWWLCFYRHMRSSLPRAEGLRGVLRAVEGFLTSCSGAAIGREAKLRRVRRAASAAEVLGEVLDNPLVLVERPSEVLEALRVALGEKGFRKTTVFSVKIAYYAVRPLAGRKPLTLDVPIPVDVRVACASISSEMVEAPSYREVVARPEAAQRAWGRVARSSGIPVLHIDSILWVTGWAPRELPPGEAREAVAGILSRALDRGKAVLLASELVRRPCPGG.

8-oxoguanine is bound by residues Q35, S62, and W73. The segment at 134–203 (NPLVLVERPS…VACASISSEM (70 aa)) is helix-hairpin-helix. K160 serves as the catalytic Schiff-base intermediate with DNA. Residues F164 and P189 each contribute to the 8-oxoguanine site. Residue D191 is part of the active site. 8-oxoguanine is bound by residues D238 and W242.

It belongs to the archaeal N-glycosylase/DNA lyase (AGOG) family.

The catalysed reaction is 2'-deoxyribonucleotide-(2'-deoxyribose 5'-phosphate)-2'-deoxyribonucleotide-DNA = a 3'-end 2'-deoxyribonucleotide-(2,3-dehydro-2,3-deoxyribose 5'-phosphate)-DNA + a 5'-end 5'-phospho-2'-deoxyribonucleoside-DNA + H(+). Its function is as follows. DNA repair enzyme that is part of the base excision repair (BER) pathway; protects from oxidative damage by removing the major product of DNA oxidation, 8-oxoguanine (GO), from single- and double-stranded DNA substrates. The polypeptide is N-glycosylase/DNA lyase (Aeropyrum pernix (strain ATCC 700893 / DSM 11879 / JCM 9820 / NBRC 100138 / K1)).